Consider the following 492-residue polypeptide: Solute carrier family 2, facilitated glucose transporter member 1 (492 aa).

M1 carries the N-acetylmethionine modification. Residues M1–R11 lie on the Cytoplasmic side of the membrane. The chain crosses the membrane as a helical span at residues L12 to I33. Residues N34 to S66 are Extracellular-facing. Residue N45 is glycosylated (N-linked (GlcNAc...) asparagine). A helical transmembrane segment spans residues L67 to V87. The Cytoplasmic portion of the chain corresponds to N88 to F90. Residues G91–F112 form a helical membrane-spanning segment. The Extracellular segment spans residues S113–E120. The helical transmembrane segment at M121–V144 threads the bilayer. The Cytoplasmic portion of the chain corresponds to G145 to A155. A helical membrane pass occupies residues L156–L176. Q161 serves as a coordination point for D-glucose. Residues D177–L185 are Extracellular-facing. Residues W186–L206 traverse the membrane as a helical segment. Residues C207–P271 are Cytoplasmic-facing. Phosphoserine is present on S226. A helical transmembrane segment spans residues I272–Y293. D-glucose is bound by residues Q282–Q283 and N288. Topologically, residues S294 to P306 are extracellular. A helical membrane pass occupies residues V307 to V328. A D-glucose-binding site is contributed by N317. At E329–R334 the chain is on the cytoplasmic side. Residues T335–L355 traverse the membrane as a helical segment. The Extracellular segment spans residues A356–S365. A helical membrane pass occupies residues Y366–W388. E380 and W388 together coordinate D-glucose. At F389–P401 the chain is on the cytoplasmic side. Residues A402–F422 traverse the membrane as a helical segment. At Q423 to C429 the chain is on the extracellular side. The helical transmembrane segment at G430–F450 threads the bilayer. Topologically, residues K451–V492 are cytoplasmic. At S465 the chain carries Phosphoserine. Positions R468–V492 are disordered. A Phosphothreonine modification is found at T478. A Phosphoserine modification is found at S490.

This sequence belongs to the major facilitator superfamily. Sugar transporter (TC 2.A.1.1) family. Glucose transporter subfamily. In terms of assembly, found in a complex with ADD2, DMTN and SLC2A1. Interacts (via C-terminus cytoplasmic region) with DMTN. Interacts with SNX27; the interaction is required when endocytosed to prevent degradation in lysosomes and promote recycling to the plasma membrane. Interacts with GIPC (via PDZ domain). Interacts with STOM. Interacts with SGTA (via Gln-rich region). Interacts with BSG. Interacts with SMIM43; the interaction may promote SLC2A1-mediated glucose transport to meet the energy needs of mesendoderm differentiation. Phosphorylation at Ser-226 by PKC promotes glucose uptake by increasing cell membrane localization.

The protein localises to the cell membrane. The protein resides in the photoreceptor inner segment. It carries out the reaction D-glucose(out) = D-glucose(in). Its activity is regulated as follows. The uptake of glucose is inhibited by cytochalasin B. Glucose uptake is increased in response to phorbol ester 12-O-tetradecanoylphorbol-13-acetate (TPA) treatment: TPA-induced glucose uptake requires phosphorylation at Ser-226. Functionally, facilitative glucose transporter, which is responsible for constitutive or basal glucose uptake. Has a very broad substrate specificity; can transport a wide range of aldoses including both pentoses and hexoses. Most important energy carrier of the brain: present at the blood-brain barrier and assures the energy-independent, facilitative transport of glucose into the brain. In association with BSG and NXNL1, promotes retinal cone survival by increasing glucose uptake into photoreceptors. Required for mesendoderm differentiation. In Oryctolagus cuniculus (Rabbit), this protein is Solute carrier family 2, facilitated glucose transporter member 1.